A 158-amino-acid chain; its full sequence is Copper transporter 2 (158 aa).

The disordered stretch occupies residues 1–20; sequence MDHDHMHDMPPPSPSSSSMS. Transmembrane regions (helical) follow at residues 53 to 73 and 104 to 124; these read GMYA…EWLA and YLVM…AIAG.

Belongs to the copper transporter (Ctr) (TC 1.A.56) family. SLC31A subfamily. As to expression, highly expressed in leaves and at lower levels in roots, stems and flowers.

It localises to the membrane. Its function is as follows. Involved in the transport of copper. This is Copper transporter 2 (COPT2) from Arabidopsis thaliana (Mouse-ear cress).